Here is a 370-residue protein sequence, read N- to C-terminus: Calcium/calmodulin-dependent protein kinase type 1 (370 aa).

Residues tyrosine 20–isoleucine 276 enclose the Protein kinase domain. ATP contacts are provided by residues leucine 26–valine 34 and lysine 49. Lysine 59 is covalently cross-linked (Glycyl lysine isopeptide (Lys-Gly) (interchain with G-Cter in ubiquitin)). Aspartate 141 (proton acceptor) is an active-site residue. The residue at position 177 (threonine 177) is a Phosphothreonine; by CaMKK1 and CaMKK2. The interval isoleucine 276–methionine 316 is autoinhibitory domain. The interval lysine 296–arginine 317 is calmodulin-binding. The Nuclear export signal signature appears at histidine 315–leucine 321. Position 363 is a phosphoserine (serine 363).

This sequence belongs to the protein kinase superfamily. CAMK Ser/Thr protein kinase family. CaMK subfamily. In terms of assembly, monomer. Interacts with XPO1. Interacts with MARK2, ARHGEF7/BETAPIX and GIT1. Phosphorylated by CaMKK1 and CaMKK2 on Thr-177. In terms of processing, polybiquitinated by the E3 ubiquitin-protein ligase complex SCF(FBXL12), leading to proteasomal degradation. In terms of tissue distribution, widely expressed. Expressed in cells of the zona glomerulosa of the adrenal cortex.

Its subcellular location is the cytoplasm. The protein localises to the nucleus. It catalyses the reaction L-seryl-[protein] + ATP = O-phospho-L-seryl-[protein] + ADP + H(+). The enzyme catalyses L-threonyl-[protein] + ATP = O-phospho-L-threonyl-[protein] + ADP + H(+). Its activity is regulated as follows. Activated by Ca(2+)/calmodulin. Binding of calmodulin results in conformational change that relieves intrasteric autoinhibition and allows phosphorylation of Thr-177 within the activation loop by CaMKK1 or CaMKK2. Phosphorylation of Thr-177 results in several fold increase in total activity. Unlike CaMK4, is unable to exhibit autonomous activity after Ca(2+)/calmodulin activation. Its function is as follows. Calcium/calmodulin-dependent protein kinase that operates in the calcium-triggered CaMKK-CaMK1 signaling cascade and, upon calcium influx, regulates transcription activators activity, cell cycle, hormone production, cell differentiation, actin filament organization and neurite outgrowth. Recognizes the substrate consensus sequence [MVLIF]-x-R-x(2)-[ST]-x(3)-[MVLIF]. Regulates axonal extension and growth cone motility in hippocampal and cerebellar nerve cells. Upon NMDA receptor-mediated Ca(2+) elevation, promotes dendritic growth in hippocampal neurons and is essential in synapses for full long-term potentiation (LTP) and ERK2-dependent translational activation. Downstream of NMDA receptors, promotes the formation of spines and synapses in hippocampal neurons by phosphorylating ARHGEF7/BETAPIX on 'Ser-694', which results in the enhancement of ARHGEF7 activity and activation of RAC1. Promotes neuronal differentiation and neurite outgrowth by activation and phosphorylation of MARK2 on 'Ser-91', 'Ser-92', 'Ser-93' and 'Ser-294'. Promotes nuclear export of HDAC5 and binding to 14-3-3 by phosphorylation of 'Ser-259' and 'Ser-498' in the regulation of muscle cell differentiation. Regulates NUMB-mediated endocytosis by phosphorylation of NUMB on 'Ser-276' and 'Ser-295'. Involved in the regulation of basal and estrogen-stimulated migration of medulloblastoma cells through ARHGEF7/BETAPIX phosphorylation. Is required for proper activation of cyclin-D1/CDK4 complex during G1 progression in diploid fibroblasts. Plays a role in K(+) and ANG2-mediated regulation of the aldosterone synthase (CYP11B2) to produce aldosterone in the adrenal cortex. Phosphorylates EIF4G3/eIF4GII. In vitro phosphorylates CREB1, ATF1, CFTR, MYL9 and SYN1/synapsin I. The chain is Calcium/calmodulin-dependent protein kinase type 1 (CAMK1) from Homo sapiens (Human).